The sequence spans 306 residues: Oxygen-dependent coproporphyrinogen-III oxidase (306 aa).

Ser-93 provides a ligand contact to substrate. A divalent metal cation is bound by residues His-97 and His-107. Catalysis depends on His-107, which acts as the Proton donor. Asn-109–Arg-111 is a substrate binding site. 2 residues coordinate a divalent metal cation: His-146 and His-176. An important for dimerization region spans residues Tyr-241–Gly-276. Substrate is bound at residue Gly-259–Arg-261.

It belongs to the aerobic coproporphyrinogen-III oxidase family. In terms of assembly, homodimer. A divalent metal cation serves as cofactor.

Its subcellular location is the cytoplasm. The enzyme catalyses coproporphyrinogen III + O2 + 2 H(+) = protoporphyrinogen IX + 2 CO2 + 2 H2O. It functions in the pathway porphyrin-containing compound metabolism; protoporphyrin-IX biosynthesis; protoporphyrinogen-IX from coproporphyrinogen-III (O2 route): step 1/1. Functionally, involved in the heme biosynthesis. Catalyzes the aerobic oxidative decarboxylation of propionate groups of rings A and B of coproporphyrinogen-III to yield the vinyl groups in protoporphyrinogen-IX. In Stutzerimonas stutzeri (strain A1501) (Pseudomonas stutzeri), this protein is Oxygen-dependent coproporphyrinogen-III oxidase.